The chain runs to 164 residues: Small ribosomal subunit protein uS5 (164 aa).

The S5 DRBM domain occupies 10 to 73 (LEERVVAINR…EDAKKNLIEV (64 aa)).

Belongs to the universal ribosomal protein uS5 family. As to quaternary structure, part of the 30S ribosomal subunit. Contacts proteins S4 and S8.

Functionally, with S4 and S12 plays an important role in translational accuracy. In terms of biological role, located at the back of the 30S subunit body where it stabilizes the conformation of the head with respect to the body. This chain is Small ribosomal subunit protein uS5, found in Streptococcus gordonii (strain Challis / ATCC 35105 / BCRC 15272 / CH1 / DL1 / V288).